The primary structure comprises 285 residues: Probable endonuclease 4 (285 aa).

Zn(2+)-binding residues include H69, H109, E145, D179, H182, H216, D229, H231, and E261.

It belongs to the AP endonuclease 2 family. The cofactor is Zn(2+).

It catalyses the reaction Endonucleolytic cleavage to 5'-phosphooligonucleotide end-products.. Endonuclease IV plays a role in DNA repair. It cleaves phosphodiester bonds at apurinic or apyrimidinic (AP) sites, generating a 3'-hydroxyl group and a 5'-terminal sugar phosphate. This chain is Probable endonuclease 4, found in Salmonella heidelberg (strain SL476).